Reading from the N-terminus, the 1028-residue chain is Antigenic heat-stable 120 kDa protein (1028 aa).

Polar residues-rich tracts occupy residues 359 to 384 (GQSK…QYKQ) and 391 to 400 (PTNQPLQPET). The disordered stretch occupies residues 359–405 (GQSKEQPLITPQQTTSSSVEPPQYKQQVPPITPTNQPLQPETSQMQQ).

Its subcellular location is the cytoplasm. The chain is Antigenic heat-stable 120 kDa protein (sca4) from Rickettsia africae.